A 229-amino-acid polypeptide reads, in one-letter code: Dephospho-CoA kinase domain-containing protein (229 aa).

The region spanning 3 to 207 (LVGLTGGIAS…DCMQFLIIRA (205 aa)) is the DPCK domain. Residue 8–15 (GGIASGKS) participates in ATP binding.

The protein belongs to the CoaE family.

The protein is Dephospho-CoA kinase domain-containing protein (dcakd) of Danio rerio (Zebrafish).